A 67-amino-acid chain; its full sequence is Penaeidin-4a (67 aa).

The first 19 residues, 1–19 (MRLVVCLVFLASFALVCQG), serve as a signal peptide directing secretion. Cystine bridges form between C42–C56, C45–C63, and C57–C64. An Arginine amide modification is found at R66.

The protein belongs to the penaeidin family.

It localises to the cytoplasmic granule. Antibacterial and antifungal activity. Presents chitin-binding activity. The protein is Penaeidin-4a of Penaeus vannamei (Whiteleg shrimp).